A 316-amino-acid polypeptide reads, in one-letter code: DDRGK domain-containing protein 1 (316 aa).

Residues 1-3 are Lumenal-facing; sequence MVE. Residues 4–24 traverse the membrane as a helical segment; sequence LDYLFLGSVGFLTIALMLIIL. Topologically, residues 25–316 are cytoplasmic; it reads RIIKLYFDEK…VEHVSELTAA (292 aa). The interval 147–187 is disordered; sequence LEQEKEKRLQKEREKQMEQEEEERKRKCREREEREKREEEE.

The protein belongs to the DDRGK1 family.

It is found in the endoplasmic reticulum membrane. Substrate adapter for ufmylation, the covalent attachment of the ubiquitin-like modifier UFM1 to substrate proteins. This is DDRGK domain-containing protein 1 from Brugia malayi (Filarial nematode worm).